The chain runs to 370 residues: Lysophosphatidic acid receptor 4 (370 aa).

The Extracellular segment spans residues 1-43 (MGDRRFIDFQFQDSNSSLRPRLGNATANNTCIVDDSFKYNLNG). N-linked (GlcNAc...) asparagine glycosylation is found at asparagine 15, asparagine 24, and asparagine 28. Residues 44-64 (AVYSVVFILGLITNSVSLFVF) traverse the membrane as a helical segment. Residues 65-73 (CFRMKMRSE) lie on the Cytoplasmic side of the membrane. A helical membrane pass occupies residues 74–94 (TAIFITNLAVSDLLFVCTLPF). Residues 95–112 (KIFYNFNRHWPFGDTLCK) lie on the Extracellular side of the membrane. Cysteine 111 and cysteine 188 are oxidised to a cystine. The helical transmembrane segment at 113-133 (ISGTAFLTNIYGSMLFLTCIS) threads the bilayer. Over 134–155 (VDRFLAIVYPFRSRTIRTRRNS) the chain is Cytoplasmic. The chain crosses the membrane as a helical span at residues 156-176 (AIVCAGVWILVLSGGISASLF). Residues 177–203 (STTNVNNATTTCFEGFSKRVWKTYLSK) lie on the Extracellular side of the membrane. Asparagine 183 carries N-linked (GlcNAc...) asparagine glycosylation. The chain crosses the membrane as a helical span at residues 204–224 (ITIFIEVVGFIIPLILNVSCS). Residues 225–254 (SVVLRTLRKPATLSQIGTNKKKVLKMITVH) are Cytoplasmic-facing. A helical transmembrane segment spans residues 255 to 275 (MAVFVVCFVPYNSVLFLYALV). Topologically, residues 276 to 294 (RSQAITNCFLERFAKIMYP) are extracellular. A helical membrane pass occupies residues 295-315 (ITLCLATLNCCFDPFIYYFTL). Residues 316 to 370 (ESFQKSFYINAHIRMESLFKTETPLTTKPSLPAIQEEVSDQTTNNGGELMLESTF) lie on the Cytoplasmic side of the membrane.

It belongs to the G-protein coupled receptor 1 family. As to expression, high expression in ovary. Not detected in the brain regions thalamus, putamen, caudate, frontal cortex, pons, hypothalamus and hippocampus.

The protein localises to the cell membrane. Functionally, receptor for lysophosphatidic acid (LPA), a mediator of diverse cellular activities. Transduces a signal by increasing the intracellular calcium ions and by stimulating adenylyl cyclase activity. The rank order of potency for agonists of this receptor is 1-oleoyl- &gt; 1-stearoyl- &gt; 1-palmitoyl- &gt; 1-myristoyl- &gt; 1-alkyl- &gt; 1-alkenyl-LPA. The sequence is that of Lysophosphatidic acid receptor 4 (LPAR4) from Homo sapiens (Human).